We begin with the raw amino-acid sequence, 211 residues long: Potassium-transporting ATPase KdpC subunit (211 aa).

Residues 13–35 (VVTMVLTGLLYPLAVTGLAQLLF) traverse the membrane as a helical segment.

This sequence belongs to the KdpC family. The system is composed of three essential subunits: KdpA, KdpB and KdpC.

It is found in the cell membrane. Functionally, part of the high-affinity ATP-driven potassium transport (or Kdp) system, which catalyzes the hydrolysis of ATP coupled with the electrogenic transport of potassium into the cytoplasm. This subunit acts as a catalytic chaperone that increases the ATP-binding affinity of the ATP-hydrolyzing subunit KdpB by the formation of a transient KdpB/KdpC/ATP ternary complex. This chain is Potassium-transporting ATPase KdpC subunit, found in Myxococcus xanthus.